A 377-amino-acid chain; its full sequence is Mitogen-activated protein kinase pmk-1 (377 aa).

Residues 35–319 enclose the Protein kinase domain; sequence YINLTPIGTG…AKEAMEHEYL (285 aa). Residues 41–49 and lysine 64 contribute to the ATP site; that span reads IGTGAYGTV. The Proton acceptor role is filled by aspartate 179. Residue threonine 191 is modified to Phosphothreonine. Positions 191-193 match the TXY motif; the sequence is TGY. The residue at position 193 (tyrosine 193) is a Phosphotyrosine.

It belongs to the protein kinase superfamily. CMGC Ser/Thr protein kinase family. MAP kinase subfamily. As to quaternary structure, interacts with transcription factor atf-7; perhaps in a manner dependent on dual specificity protein kinase sek-1. Mg(2+) serves as cofactor. It depends on Mn(2+) as a cofactor. Post-translationally, dually phosphorylated on Thr-191 and Tyr-193, probably by sek-1, which activates the enzyme. Increased phosphorylation in response to the heavy metal arsenite. Increased phosphorylation in response to intestinal colonization by probiotic Lactobacillus fermentum strain JDFM216. As to expression, expressed in intestinal cells.

The protein localises to the nucleus. It catalyses the reaction L-seryl-[protein] + ATP = O-phospho-L-seryl-[protein] + ADP + H(+). The enzyme catalyses L-threonyl-[protein] + ATP = O-phospho-L-threonyl-[protein] + ADP + H(+). With respect to regulation, activated by phosphorylation on threonine and tyrosine. Inhibited by pyridinyl-imidazole related compounds. In terms of biological role, serine/threonine kinase which responds to activation by environmental stress and pro-inflammatory cytokines by phosphorylating downstream targets. As part of a MAP kinase signaling pathway, plays a role in modulation of lifespan and immunity. Phosphorylates skn-1 which probably regulates skn-1 nuclear translocation in response to oxidative stress. Probably by activating skn-1, involved in the up-regulation of gcs-1 and glutathione-S-transferase gst-4 expression upon bacteria infection. Up-regulates expression of gcs-1 in intestinal cells upon arsenite treatment. Functions downstream of the MAPKK sek-1 and the MAPKKK nsy-1 as the MAP kinase which regulates pathogen resistance and responses to oxidative stress. Required for expression of antimicrobial peptide nlp-29 in response to fungal infection or physical injury. Involved in resistance to the nematotoxic C.cinerea galectin (Cgl2). May play a redundant role with other MAP kinases in susceptibility to anoxia, downstream of tir-1/nsy-1. Phosphorylates transcription factor rnt-1 during oxidative stress which results in rnt-1 stabilization in the intestine. Phosphorylates transcription factor atf-7 during pathogen infection resulting in modulation of target genes. Probably downstream of nsy-1 and sek-1, involved in germline apoptosis induced by heavy metals, such as Cu(2+). Regulates the basal expression of immune effector genes including irg-4, irg-5, mul-1 and drd-50. This chain is Mitogen-activated protein kinase pmk-1, found in Caenorhabditis elegans.